Here is a 407-residue protein sequence, read N- to C-terminus: Phosphopentomutase (407 aa).

The Mn(2+) site is built by Asp-10, Asp-306, His-311, Asp-347, His-348, and His-359.

Belongs to the phosphopentomutase family. Mn(2+) is required as a cofactor.

It localises to the cytoplasm. The enzyme catalyses 2-deoxy-alpha-D-ribose 1-phosphate = 2-deoxy-D-ribose 5-phosphate. It catalyses the reaction alpha-D-ribose 1-phosphate = D-ribose 5-phosphate. It functions in the pathway carbohydrate degradation; 2-deoxy-D-ribose 1-phosphate degradation; D-glyceraldehyde 3-phosphate and acetaldehyde from 2-deoxy-alpha-D-ribose 1-phosphate: step 1/2. Its function is as follows. Isomerase that catalyzes the conversion of deoxy-ribose 1-phosphate (dRib-1-P) and ribose 1-phosphate (Rib-1-P) to deoxy-ribose 5-phosphate (dRib-5-P) and ribose 5-phosphate (Rib-5-P), respectively. The chain is Phosphopentomutase from Serratia proteamaculans (strain 568).